The primary structure comprises 169 residues: Ubiquitin-conjugating enzyme E2 2 (169 aa).

The UBC core domain occupies 4-150; sequence AAKRRLIRDF…VKKTVELSWV (147 aa). Cys-88 functions as the Glycyl thioester intermediate in the catalytic mechanism.

It belongs to the ubiquitin-conjugating enzyme family.

The protein resides in the cytoplasm. It is found in the nucleus. It carries out the reaction S-ubiquitinyl-[E1 ubiquitin-activating enzyme]-L-cysteine + [E2 ubiquitin-conjugating enzyme]-L-cysteine = [E1 ubiquitin-activating enzyme]-L-cysteine + S-ubiquitinyl-[E2 ubiquitin-conjugating enzyme]-L-cysteine.. It participates in protein modification; protein ubiquitination. In terms of biological role, catalyzes the covalent attachment of ubiquitin to other proteins. Plays a role in transcription regulation by catalyzing the monoubiquitination of histone H2B to form H2BK123ub1. H2BK123ub1 gives a specific tag for epigenetic transcriptional activation and is also a prerequisite for H3K4me and H3K79me formation. Also involved in postreplication repair of UV-damaged DNA, in N-end rule-dependent protein degradation and in sporulation. The chain is Ubiquitin-conjugating enzyme E2 2 (UBC2) from Cryptococcus neoformans var. neoformans serotype D (strain B-3501A) (Filobasidiella neoformans).